The primary structure comprises 216 residues: Urease accessory protein UreG (216 aa).

24-31 (GPVGSGKT) serves as a coordination point for GTP.

The protein belongs to the SIMIBI class G3E GTPase family. UreG subfamily. Homodimer. UreD, UreF and UreG form a complex that acts as a GTP-hydrolysis-dependent molecular chaperone, activating the urease apoprotein by helping to assemble the nickel containing metallocenter of UreC. The UreE protein probably delivers the nickel.

It is found in the cytoplasm. Functionally, facilitates the functional incorporation of the urease nickel metallocenter. This process requires GTP hydrolysis, probably effectuated by UreG. The sequence is that of Urease accessory protein UreG from Variovorax paradoxus (strain S110).